The sequence spans 54 residues: ATP synthase protein 8 (54 aa).

A helical transmembrane segment spans residues 9 to 25 (WVFLFFLVWLVLGFLGL).

The protein belongs to the ATPase protein 8 family. In terms of assembly, F-type ATPases have 2 components, CF(1) - the catalytic core - and CF(0) - the membrane proton channel.

The protein localises to the mitochondrion membrane. Functionally, mitochondrial membrane ATP synthase (F(1)F(0) ATP synthase or Complex V) produces ATP from ADP in the presence of a proton gradient across the membrane which is generated by electron transport complexes of the respiratory chain. F-type ATPases consist of two structural domains, F(1) - containing the extramembraneous catalytic core and F(0) - containing the membrane proton channel, linked together by a central stalk and a peripheral stalk. During catalysis, ATP synthesis in the catalytic domain of F(1) is coupled via a rotary mechanism of the central stalk subunits to proton translocation. Part of the complex F(0) domain. Minor subunit located with subunit a in the membrane. This chain is ATP synthase protein 8 (MTATP8), found in Branchiostoma floridae (Florida lancelet).